A 368-amino-acid chain; its full sequence is Abasic site processing protein YMR114C (368 aa).

Catalysis depends on Cys-2, which acts as the Nucleophile. At Cys-2 the chain carries Thiazolidine linkage to a ring-opened DNA abasic site. A disordered region spans residues Val-25 to Pro-48. Over residues His-37–Asp-46 the composition is skewed to basic and acidic residues. Glu-132 is an active-site residue. The disordered stretch occupies residues Leu-270–Lys-368. 3 stretches are compositionally biased toward basic and acidic residues: residues Arg-281 to Asn-296, Asn-304 to Glu-313, and Ile-326 to Asn-349. Ser-338 is modified (phosphoserine).

This sequence belongs to the SOS response-associated peptidase family.

The protein resides in the chromosome. Its activity is regulated as follows. Formation and reversal of DNA-protein cross-link depends on DNA context. Catalyzes formation of the thiazolidine linkage in presence of abasic sites in single-stranded DNA. Mediates the reversal of the thiazolidine cross-link in presence of double stranded DNA. Its function is as follows. Sensor of abasic sites in single-stranded DNA (ssDNA) required to preserve genome integrity by promoting error-free repair of abasic sites. Recognizes and binds abasic sites in ssDNA at replication forks and chemically modifies the lesion by forming a covalent cross-link with DNA: forms a stable thiazolidine linkage between a ring-opened abasic site and the alpha-amino and sulfhydryl substituents of its N-terminal catalytic cysteine residue. The DNA-protein cross-link is then reversed: able to catalyze the reversal of the thiazolidine cross-link and cycle between a cross-link and a non-cross-linked state depending on DNA context: mediates self-reversal of the thiazolidine cross-link in double stranded DNA. Acts as a protease: mediates autocatalytic processing of its N-terminal methionine in order to expose the catalytic cysteine. In Saccharomyces cerevisiae (strain ATCC 204508 / S288c) (Baker's yeast), this protein is Abasic site processing protein YMR114C.